The sequence spans 949 residues: Glycine dehydrogenase (decarboxylating) (949 aa).

An N6-(pyridoxal phosphate)lysine modification is found at Lys-704.

It belongs to the GcvP family. In terms of assembly, the glycine cleavage system is composed of four proteins: P, T, L and H. It depends on pyridoxal 5'-phosphate as a cofactor.

The enzyme catalyses N(6)-[(R)-lipoyl]-L-lysyl-[glycine-cleavage complex H protein] + glycine + H(+) = N(6)-[(R)-S(8)-aminomethyldihydrolipoyl]-L-lysyl-[glycine-cleavage complex H protein] + CO2. In terms of biological role, the glycine cleavage system catalyzes the degradation of glycine. The P protein binds the alpha-amino group of glycine through its pyridoxal phosphate cofactor; CO(2) is released and the remaining methylamine moiety is then transferred to the lipoamide cofactor of the H protein. The chain is Glycine dehydrogenase (decarboxylating) from Bacteroides fragilis (strain ATCC 25285 / DSM 2151 / CCUG 4856 / JCM 11019 / LMG 10263 / NCTC 9343 / Onslow / VPI 2553 / EN-2).